We begin with the raw amino-acid sequence, 295 residues long: uncharacterized protein (295 aa).

Belongs to the NAD(P)-dependent epimerase/dehydratase family.

This is an uncharacterized protein from Schizosaccharomyces pombe (strain 972 / ATCC 24843) (Fission yeast).